We begin with the raw amino-acid sequence, 1077 residues long: Carbamoyl phosphate synthase large chain (1077 aa).

The carboxyphosphate synthetic domain stretch occupies residues 1-403 (MPKRTDIQSI…SLHKALRGLE (403 aa)). The ATP site is built by arginine 129, arginine 169, glycine 175, glycine 176, glutamate 208, leucine 210, glutamate 215, glycine 241, isoleucine 242, histidine 243, glutamine 285, and glutamate 299. The 196-residue stretch at 133 to 328 (DKAMKSIGLE…IAKIAAKLAV (196 aa)) folds into the ATP-grasp 1 domain. Mg(2+) contacts are provided by glutamine 285, glutamate 299, and asparagine 301. Residues glutamine 285, glutamate 299, and asparagine 301 each coordinate Mn(2+). The segment at 404–553 (VGATGFDEMV…YSSYDEECEA (150 aa)) is oligomerization domain. A carbamoyl phosphate synthetic domain region spans residues 554–935 (NPTDKDKIMV…AYAKAELGCG (382 aa)). Positions 678-869 (QAAVERLGLL…LAKIAARVMA (192 aa)) constitute an ATP-grasp 2 domain. ATP-binding residues include arginine 714, arginine 753, leucine 755, glutamate 760, glycine 785, valine 786, histidine 787, serine 788, glutamine 828, and glutamate 840. The Mg(2+) site is built by glutamine 828, glutamate 840, and asparagine 842. Mn(2+) contacts are provided by glutamine 828, glutamate 840, and asparagine 842. The MGS-like domain occupies 936 to 1077 (SVYPEGGRAL…HAKVKASLEA (142 aa)). Positions 936–1077 (SVYPEGGRAL…HAKVKASLEA (142 aa)) are allosteric domain.

This sequence belongs to the CarB family. Composed of two chains; the small (or glutamine) chain promotes the hydrolysis of glutamine to ammonia, which is used by the large (or ammonia) chain to synthesize carbamoyl phosphate. Tetramer of heterodimers (alpha,beta)4. The cofactor is Mg(2+). It depends on Mn(2+) as a cofactor.

It carries out the reaction hydrogencarbonate + L-glutamine + 2 ATP + H2O = carbamoyl phosphate + L-glutamate + 2 ADP + phosphate + 2 H(+). The enzyme catalyses hydrogencarbonate + NH4(+) + 2 ATP = carbamoyl phosphate + 2 ADP + phosphate + 2 H(+). It functions in the pathway amino-acid biosynthesis; L-arginine biosynthesis; carbamoyl phosphate from bicarbonate: step 1/1. The protein operates within pyrimidine metabolism; UMP biosynthesis via de novo pathway; (S)-dihydroorotate from bicarbonate: step 1/3. Its function is as follows. Large subunit of the glutamine-dependent carbamoyl phosphate synthetase (CPSase). CPSase catalyzes the formation of carbamoyl phosphate from the ammonia moiety of glutamine, carbonate, and phosphate donated by ATP, constituting the first step of 2 biosynthetic pathways, one leading to arginine and/or urea and the other to pyrimidine nucleotides. The large subunit (synthetase) binds the substrates ammonia (free or transferred from glutamine from the small subunit), hydrogencarbonate and ATP and carries out an ATP-coupled ligase reaction, activating hydrogencarbonate by forming carboxy phosphate which reacts with ammonia to form carbamoyl phosphate. The chain is Carbamoyl phosphate synthase large chain from Vibrio parahaemolyticus serotype O3:K6 (strain RIMD 2210633).